The following is a 190-amino-acid chain: Elongation factor P (190 aa).

It belongs to the elongation factor P family.

The protein localises to the cytoplasm. It functions in the pathway protein biosynthesis; polypeptide chain elongation. In terms of biological role, involved in peptide bond synthesis. Stimulates efficient translation and peptide-bond synthesis on native or reconstituted 70S ribosomes in vitro. Probably functions indirectly by altering the affinity of the ribosome for aminoacyl-tRNA, thus increasing their reactivity as acceptors for peptidyl transferase. This chain is Elongation factor P, found in Pseudomonas fluorescens (strain ATCC BAA-477 / NRRL B-23932 / Pf-5).